Consider the following 420-residue polypeptide: MAPWPPKGLVPAMLWGLSLFLNLPGPIWLQPSPPPQSSPPPQPHPCHTCRGLVDSFNKGLERTIRDNFGGGNTAWEEENLSKYKDSETRLVEVLEGVCSKSDFECHRLLELSEELVESWWFHKQQEAPDLFQWLCSDSLKLCCPAGTFGPSCLPCPGGTERPCGGYGQCEGEGTRGGSGHCDCQAGYGGEACGQCGLGYFEAERNASHLVCSACFGPCARCSGPEESNCLQCKKGWALHHLKCVDIDECGTEGANCGADQFCVNTEGSYECRDCAKACLGCMGAGPGRCKKCSPGYQQVGSKCLDVDECETEVCPGENKQCENTEGGYRCICAEGYKQMEGICVKEQIPESAGFFSEMTEDELVVLQQMFFGIIICALATLAAKGDLVFTAIFIGAVAAMTGYWLSERSDRVLEGFIKGR.

Positions 1–29 are cleaved as a signal peptide; that stretch reads MAPWPPKGLVPAMLWGLSLFLNLPGPIWL. Topologically, residues 30–362 are extracellular; the sequence is QPSPPPQSSP…GFFSEMTEDE (333 aa). Residues 46 to 49 carry the CXXC motif; the sequence is CHTC. Cys46 and Cys49 are joined by a disulfide. N-linked (GlcNAc...) asparagine glycosylation occurs at Asn79. Residues 153-193 enclose the EGF-like 1 domain; that stretch reads LPCPGGTERPCGGYGQCEGEGTRGGSGHCDCQAGYGGEACG. 3 disulfide bridges follow: Cys155–Cys169, Cys163–Cys181, and Cys183–Cys192. A glycan (N-linked (GlcNAc...) asparagine) is linked at Asn205. FU repeat units follow at residues 208–256 and 268–315; these read HLVC…GANC and SYEC…EVCP. A CXXC motif is present at residues 278–281; it reads CLGC. 4 disulfides stabilise this stretch: Cys278–Cys281, Cys309–Cys321, Cys314–Cys330, and Cys332–Cys343. Residues 305 to 344 form the EGF-like 2; calcium-binding domain; that stretch reads DVDECETEVCPGENKQCENTEGGYRCICAEGYKQMEGICV. Residues 363-383 traverse the membrane as a helical segment; the sequence is LVVLQQMFFGIIICALATLAA. Position 384 (Lys384) is a topological domain, cytoplasmic. A helical membrane pass occupies residues 385-405; sequence GDLVFTAIFIGAVAAMTGYWL. The Extracellular portion of the chain corresponds to 406 to 420; sequence SERSDRVLEGFIKGR.

This sequence belongs to the CRELD family. As to expression, highly expressed in fetal lung, liver, kidney, adult heart, brain and skeletal muscle. Weakly expressed in placenta, fetal brain, and adult lung, liver, kidney and pancreas.

Its subcellular location is the membrane. The catalysed reaction is Catalyzes the rearrangement of -S-S- bonds in proteins.. Protein disulfide isomerase. Promotes the localization of acetylcholine receptors (AChRs) to the plasma membrane. The polypeptide is Protein disulfide isomerase CRELD1 (CRELD1) (Homo sapiens (Human)).